Here is a 390-residue protein sequence, read N- to C-terminus: METFLFTSESVNEGHPDKLCDQISDAILDACLEQDPESKVACETCTKTNMVMVFGEITTAAKVDYEKIVRSTCREIGFISADVGLDADKCNVLVNIEQQSPDIAQGVHGHLTKKPEDIGAGDQGHMFGYATDETPELMPLTHVLATKLGAKLTEVRKNKTCPWLRPDGKTQVTVEYKNDGGAMIPIRVHTVLISTQHDETVTNDEIAADLKEHVIKPVIPAKYLDDNTIFHLNPSGRFVIGGPHGDAGLTGRKIIIDTYGGWGAHGGGAFSGKDPTKVDRSGAYIVRQAAKSVVAAGLARRCIVQVSYAIGVPEPLSVFVDTYKTGTIPDKDILVLIKEAFDFRPGMMAINLDLKRGGNFRFQKTAAYGHFGRDDPDFTWEVVKPLKPKA.

E9 is a binding site for Mg(2+). H15 is an ATP binding site. E43 contributes to the K(+) binding site. Positions 56 and 99 each coordinate L-methionine. ATP is bound by residues 167 to 169, 235 to 238, D246, 252 to 253, A269, K273, and K277; these read DGK, SGRF, and RK. D246 is a binding site for L-methionine. L-methionine is bound at residue K277.

It belongs to the AdoMet synthase family. Homotetramer. Interacts with GRF3. Requires Mn(2+) as cofactor. It depends on Mg(2+) as a cofactor. Co(2+) serves as cofactor. The cofactor is K(+).

It localises to the cytoplasm. It carries out the reaction L-methionine + ATP + H2O = S-adenosyl-L-methionine + phosphate + diphosphate. It participates in amino-acid biosynthesis; S-adenosyl-L-methionine biosynthesis; S-adenosyl-L-methionine from L-methionine: step 1/1. With respect to regulation, inhibited by 5,5'-dithiobis-2-nitrobenzoic acid (DTNB) and N-ethylmaleimide (NEM) (in vitro). Functionally, catalyzes the formation of S-adenosylmethionine from methionine and ATP. The reaction comprises two steps that are both catalyzed by the same enzyme: formation of S-adenosylmethionine (AdoMet) and triphosphate, and subsequent hydrolysis of the triphosphate. Involved in the biosynthesis of lignin. The protein is S-adenosylmethionine synthase 3 (METK3) of Arabidopsis thaliana (Mouse-ear cress).